The sequence spans 353 residues: Photosystem II D2 protein (353 aa).

At Thr-2 the chain carries N-acetylthreonine. The residue at position 2 (Thr-2) is a Phosphothreonine. A helical transmembrane segment spans residues 41–61 (CAYFALGGWFTGTTFVTSWYT). His-118 contacts chlorophyll a. A helical transmembrane segment spans residues 125 to 141 (GFMLRQFELARSVQLRP). Positions 130 and 143 each coordinate pheophytin a. The chain crosses the membrane as a helical span at residues 153-166 (VFVSVFLIYPLGQS). A chlorophyll a-binding site is contributed by His-198. The helical transmembrane segment at 208–228 (AALLCAIHGATVENTLFEDGD) threads the bilayer. A plastoquinone-binding residues include His-215 and Phe-262. His-215 contacts Fe cation. His-269 contributes to the Fe cation binding site. Residues 279-295 (GLWMSALGVVGLALNLR) form a helical membrane-spanning segment.

It belongs to the reaction center PufL/M/PsbA/D family. PSII is composed of 1 copy each of membrane proteins PsbA, PsbB, PsbC, PsbD, PsbE, PsbF, PsbH, PsbI, PsbJ, PsbK, PsbL, PsbM, PsbT, PsbX, PsbY, PsbZ, Psb30/Ycf12, at least 3 peripheral proteins of the oxygen-evolving complex and a large number of cofactors. It forms dimeric complexes. The cofactor is The D1/D2 heterodimer binds P680, chlorophylls that are the primary electron donor of PSII, and subsequent electron acceptors. It shares a non-heme iron and each subunit binds pheophytin, quinone, additional chlorophylls, carotenoids and lipids. There is also a Cl(-1) ion associated with D1 and D2, which is required for oxygen evolution. The PSII complex binds additional chlorophylls, carotenoids and specific lipids..

It localises to the plastid. Its subcellular location is the chloroplast thylakoid membrane. The enzyme catalyses 2 a plastoquinone + 4 hnu + 2 H2O = 2 a plastoquinol + O2. Its function is as follows. Photosystem II (PSII) is a light-driven water:plastoquinone oxidoreductase that uses light energy to abstract electrons from H(2)O, generating O(2) and a proton gradient subsequently used for ATP formation. It consists of a core antenna complex that captures photons, and an electron transfer chain that converts photonic excitation into a charge separation. The D1/D2 (PsbA/PsbD) reaction center heterodimer binds P680, the primary electron donor of PSII as well as several subsequent electron acceptors. D2 is needed for assembly of a stable PSII complex. The polypeptide is Photosystem II D2 protein (Pelargonium hortorum (Common geranium)).